A 223-amino-acid polypeptide reads, in one-letter code: Probable chemoreceptor glutamine deamidase CheD (223 aa).

The tract at residues 189 to 223 is disordered; it reads QTASAKAHTPPQIERFSAPAKPRFERFTRPSTATS.

The protein belongs to the CheD family.

The catalysed reaction is L-glutaminyl-[protein] + H2O = L-glutamyl-[protein] + NH4(+). Its function is as follows. Probably deamidates glutamine residues to glutamate on methyl-accepting chemotaxis receptors (MCPs), playing an important role in chemotaxis. This is Probable chemoreceptor glutamine deamidase CheD from Bordetella petrii (strain ATCC BAA-461 / DSM 12804 / CCUG 43448).